A 226-amino-acid polypeptide reads, in one-letter code: Acyl-homoserine-lactone synthase (226 aa).

The protein belongs to the autoinducer synthase family.

The enzyme catalyses a fatty acyl-[ACP] + S-adenosyl-L-methionine = an N-acyl-L-homoserine lactone + S-methyl-5'-thioadenosine + holo-[ACP] + H(+). Required for the synthesis of OHHL (N-(3-oxohexanoyl)-L-homoserine lactone), an autoinducer molecule. The sequence is that of Acyl-homoserine-lactone synthase (psyI) from Pseudomonas amygdali pv. tabaci (Pseudomonas syringae pv. tabaci).